The primary structure comprises 599 residues: Proline--tRNA ligase (599 aa).

It belongs to the class-II aminoacyl-tRNA synthetase family. ProS type 1 subfamily. Homodimer.

The protein localises to the cytoplasm. The enzyme catalyses tRNA(Pro) + L-proline + ATP = L-prolyl-tRNA(Pro) + AMP + diphosphate. In terms of biological role, catalyzes the attachment of proline to tRNA(Pro) in a two-step reaction: proline is first activated by ATP to form Pro-AMP and then transferred to the acceptor end of tRNA(Pro). As ProRS can inadvertently accommodate and process non-cognate amino acids such as alanine and cysteine, to avoid such errors it has two additional distinct editing activities against alanine. One activity is designated as 'pretransfer' editing and involves the tRNA(Pro)-independent hydrolysis of activated Ala-AMP. The other activity is designated 'posttransfer' editing and involves deacylation of mischarged Ala-tRNA(Pro). The misacylated Cys-tRNA(Pro) is not edited by ProRS. This chain is Proline--tRNA ligase, found in Prochlorococcus marinus (strain MIT 9303).